The following is a 443-amino-acid chain: Signal recognition particle 54 kDa protein (443 aa).

GTP contacts are provided by residues 107–114 (GIQGSGKT), 189–193 (DTAGR), and 247–250 (TKLD).

This sequence belongs to the GTP-binding SRP family. SRP54 subfamily. In terms of assembly, part of the signal recognition particle protein translocation system, which is composed of SRP and FtsY. Archaeal SRP consists of a 7S RNA molecule of 300 nucleotides and two protein subunits: SRP54 and SRP19.

It localises to the cytoplasm. The catalysed reaction is GTP + H2O = GDP + phosphate + H(+). In terms of biological role, involved in targeting and insertion of nascent membrane proteins into the cytoplasmic membrane. Binds to the hydrophobic signal sequence of the ribosome-nascent chain (RNC) as it emerges from the ribosomes. The SRP-RNC complex is then targeted to the cytoplasmic membrane where it interacts with the SRP receptor FtsY. In Pyrococcus furiosus (strain ATCC 43587 / DSM 3638 / JCM 8422 / Vc1), this protein is Signal recognition particle 54 kDa protein.